Consider the following 130-residue polypeptide: Large ribosomal subunit protein uL14 (130 aa).

Belongs to the universal ribosomal protein uL14 family. Part of the 50S ribosomal subunit. Forms a cluster with proteins L3 and L19. In the 70S ribosome, L14 and L19 interact and together make contacts with the 16S rRNA in bridges B5 and B8.

In terms of biological role, binds to 23S rRNA. Forms part of two intersubunit bridges in the 70S ribosome. This chain is Large ribosomal subunit protein uL14, found in Leptospira biflexa serovar Patoc (strain Patoc 1 / Ames).